We begin with the raw amino-acid sequence, 220 residues long: Putative O-methyltransferase Mjls_4009 (220 aa).

S-adenosyl-L-methionine-binding positions include V47, E69, 71 to 72 (GT), S77, D95, and V96. Residue D143 coordinates substrate. D145 contributes to the S-adenosyl-L-methionine binding site.

The protein belongs to the class I-like SAM-binding methyltransferase superfamily. Cation-dependent O-methyltransferase family.

The chain is Putative O-methyltransferase Mjls_4009 from Mycobacterium sp. (strain JLS).